The sequence spans 153 residues: uncharacterized protein (153 aa).

2 disordered regions span residues 30 to 66 (GPTV…RKGD) and 79 to 153 (IKEN…DYDD). A compositionally biased stretch (acidic residues) spans 45 to 56 (EDSDGSDKEDEQ). Polar residues-rich tracts occupy residues 106–116 (GDTTSGVNACS) and 130–144 (GTKS…SSLL).

This is an uncharacterized protein from Xenopus laevis (African clawed frog).